Consider the following 98-residue polypeptide: La1-like protein 13 (98 aa).

Positions 1-24 are cleaved as a signal peptide; it reads MERILKPVFLAILIVLSFSSQCMG. Lysine amide is present on Lys-97.

The protein belongs to the scorpion La1-like peptide family. Contains 4 disulfide bonds. Expressed by the venom gland.

It is found in the secreted. This is La1-like protein 13 from Urodacus yaschenkoi (Inland robust scorpion).